We begin with the raw amino-acid sequence, 126 residues long: Aspartate 1-decarboxylase (126 aa).

The Schiff-base intermediate with substrate; via pyruvic acid role is filled by S25. The residue at position 25 (S25) is a Pyruvic acid (Ser). A substrate-binding site is contributed by T57. Y58 serves as the catalytic Proton donor. Residue 73–75 participates in substrate binding; that stretch reads GGA.

The protein belongs to the PanD family. In terms of assembly, heterooctamer of four alpha and four beta subunits. The cofactor is pyruvate. Post-translationally, is synthesized initially as an inactive proenzyme, which is activated by self-cleavage at a specific serine bond to produce a beta-subunit with a hydroxyl group at its C-terminus and an alpha-subunit with a pyruvoyl group at its N-terminus.

It is found in the cytoplasm. The catalysed reaction is L-aspartate + H(+) = beta-alanine + CO2. It functions in the pathway cofactor biosynthesis; (R)-pantothenate biosynthesis; beta-alanine from L-aspartate: step 1/1. In terms of biological role, catalyzes the pyruvoyl-dependent decarboxylation of aspartate to produce beta-alanine. This chain is Aspartate 1-decarboxylase, found in Acinetobacter baumannii (strain AB307-0294).